The chain runs to 142 residues: Large ribosomal subunit protein uL11 (142 aa).

The protein belongs to the universal ribosomal protein uL11 family. In terms of assembly, part of the ribosomal stalk of the 50S ribosomal subunit. Interacts with L10 and the large rRNA to form the base of the stalk. L10 forms an elongated spine to which L12 dimers bind in a sequential fashion forming a multimeric L10(L12)X complex. One or more lysine residues are methylated.

Forms part of the ribosomal stalk which helps the ribosome interact with GTP-bound translation factors. This is Large ribosomal subunit protein uL11 from Akkermansia muciniphila (strain ATCC BAA-835 / DSM 22959 / JCM 33894 / BCRC 81048 / CCUG 64013 / CIP 107961 / Muc).